Reading from the N-terminus, the 87-residue chain is uncharacterized protein (87 aa).

2 consecutive transmembrane segments (helical) span residues 10–30 (VAFTVLAYFTFFAGVFLFSIG) and 43–63 (GYYIAVMILVAVGAILTQKVT).

The protein localises to the cell membrane. This is an uncharacterized protein from Bacillus subtilis (strain 168).